Here is an 852-residue protein sequence, read N- to C-terminus: Lon protease homolog 2, peroxisomal (852 aa).

Serine 2 carries the N-acetylserine modification. The Lon N-terminal domain maps to 13–222 (LPLLLTHEGV…MTIPLLVRQI (210 aa)). Position 375-382 (375-382 (GPPGVGKT)) interacts with ATP. A Lon proteolytic domain is found at 651–837 (LSQPGVAIGL…DEVLNAAFDG (187 aa)). Residues serine 743 and lysine 786 contribute to the active site. A Microbody targeting signal motif is present at residues 850-852 (SKL).

Belongs to the peptidase S16 family. In terms of assembly, interacts with PEX5. Interacts with TYSND1. May interact with enzymes involved in beta-oxidation of fatty acids, including ACOX1/AOX.

Its subcellular location is the peroxisome matrix. The enzyme catalyses Hydrolysis of proteins in presence of ATP.. Functionally, ATP-dependent serine protease that mediates the selective degradation of misfolded and unassembled polypeptides in the peroxisomal matrix. Necessary for type 2 peroxisome targeting signal (PTS2)-containing protein processing and facilitates peroxisome matrix protein import. May indirectly regulate peroxisomal fatty acid beta-oxidation through degradation of the self-processed forms of TYSND1. The chain is Lon protease homolog 2, peroxisomal from Pongo abelii (Sumatran orangutan).